Reading from the N-terminus, the 331-residue chain is Ribosomal RNA small subunit methyltransferase H (331 aa).

S-adenosyl-L-methionine contacts are provided by residues 38 to 40, aspartate 56, phenylalanine 83, aspartate 100, and glutamine 107; that span reads GGY. A disordered region spans residues 287-331; it reads DEAELAENPRARSARLRVGVRTDAPAGKVDPQALGTPLIPKKGRR.

Belongs to the methyltransferase superfamily. RsmH family.

It is found in the cytoplasm. The enzyme catalyses cytidine(1402) in 16S rRNA + S-adenosyl-L-methionine = N(4)-methylcytidine(1402) in 16S rRNA + S-adenosyl-L-homocysteine + H(+). In terms of biological role, specifically methylates the N4 position of cytidine in position 1402 (C1402) of 16S rRNA. This Cereibacter sphaeroides (strain KD131 / KCTC 12085) (Rhodobacter sphaeroides) protein is Ribosomal RNA small subunit methyltransferase H.